The sequence spans 116 residues: uncharacterized protein (116 aa).

The segment at 1–72 adopts a CHY-type zinc-finger fold; that stretch reads MCKHVLNAQV…SDEYCPNCDN (72 aa). Residues C2, H4, C16, C17, C23, C26, H27, H33, C45, C48, C67, and C70 each contribute to the Zn(2+) site.

It is found in the cytoplasm. This is an uncharacterized protein from Schizosaccharomyces pombe (strain 972 / ATCC 24843) (Fission yeast).